Consider the following 687-residue polypeptide: Putative pentatricopeptide repeat-containing protein At3g15930 (687 aa).

PPR repeat units lie at residues 98–132 (DVVV…GVTP), 133–168 (DSHT…GLGS), 169–199 (NLYV…RCKE), 200–234 (DVFS…LVSP), 235–269 (TSVT…KTEP), 270–304 (SLRL…DVIS), 305–331 (WTSI…MPVR), 332–366 (DRIS…GMIP), 367–401 (DEFT…KIKN), 402–432 (DVVV…MDQR), 433–467 (DKFT…SIQP), 468–498 (DDIT…MRSD), and 504–534 (SLVH…MPMN). Positions 539–614 (VWGALLGASR…TPGFSLIEVN (76 aa)) are type E motif. Positions 615–645 (GFAHEFVAGDKSHLQSEEIYMKLEELAQEST) are type E(+) motif.

It belongs to the PPR family. PCMP-E subfamily.

The chain is Putative pentatricopeptide repeat-containing protein At3g15930 (PCMP-E51) from Arabidopsis thaliana (Mouse-ear cress).